A 509-amino-acid chain; its full sequence is Ribonuclease Y (509 aa).

A helical membrane pass occupies residues 5 to 25 (IAGVSGIAGAAVGAGACYLWL). Residues 199–265 (LINLVNLPSD…TRVIEILIED (67 aa)) enclose the KH domain. The region spanning 325–418 (ALAHTLEVAK…VCAADTLSAA (94 aa)) is the HD domain.

The protein belongs to the RNase Y family.

The protein resides in the cell membrane. In terms of biological role, endoribonuclease that initiates mRNA decay. The sequence is that of Ribonuclease Y from Sulfurovum sp. (strain NBC37-1).